An 893-amino-acid polypeptide reads, in one-letter code: POU domain protein 2, isoform B (893 aa).

The tract at residues 586 to 668 is disordered; that stretch reads QMKQQQREDP…STPKPTSGLT (83 aa). A compositionally biased stretch (low complexity) spans 602–617; sequence PLAKSPLRSPSLSPVP. The segment covering 623-646 has biased composition (polar residues); sequence QQRTPPNSMTANSLGMSSAVMTPN. Positions 647 to 665 are enriched in low complexity; sequence TPSMQQQPQLQQSTPKPTS. One can recognise a POU-specific domain in the interval 681-755; it reads EETTDLEELE…LLQKWLEDAD (75 aa). The segment at residues 786-845 is a DNA-binding region (homeobox); that stretch reads RRKKRTSIETTVRTTLEKAFLMNCKPTSEEISQLSERLNMDKEVIRVWFCNRRQKEKRIN.

Belongs to the POU transcription factor family. Class-2 subfamily. As to expression, initial expression in cellular blastoderm stage, then in ectodermal stripes during germband extension. Broad expression in the neuroectoderm followed by limitation to discrete subsets of CNS cells, and expression in specific PNS neurons and support cells.

It is found in the nucleus. Functionally, DNA-binding regulatory protein implicated in early development. Involved in neuronal cell fate decision. May act as an octamer-dependent activator of transcription. Could also play an early role in specific ectodermal cells, and a subsequent role in the embryonic nervous system. This chain is POU domain protein 2, isoform B, found in Drosophila melanogaster (Fruit fly).